A 207-amino-acid chain; its full sequence is CASP-like protein 1D1 (207 aa).

The Cytoplasmic segment spans residues 1–40; the sequence is MATVDGTTAPSSGGKTATVALESGGGRYGGPAPAKCSGAN. Residues 41–61 form a helical membrane-spanning segment; it reads LALRALLFAVSLSALVVLVTA. Topologically, residues 62 to 89 are extracellular; the sequence is KQTVMVPFVIRPPQFILAPVPAKYTHSP. The chain crosses the membrane as a helical span at residues 90–110; it reads ALIYLLAALCATCFYSLITAI. Residues 111–124 lie on the Cytoplasmic side of the membrane; it reads SSVRLLSSSACSAK. A helical membrane pass occupies residues 125-145; the sequence is TLFYLILLDVFYAAVMASATG. Residues 146-176 are Extracellular-facing; that stretch reads TAGAVAWVGLKGNSHTRWNKICNVYGKFCRH. The helical transmembrane segment at 177–197 threads the bilayer; sequence IGSSTFLALIAAIVLVLLAFL. The Cytoplasmic segment spans residues 198-207; the sequence is NAYSLYRRSR.

This sequence belongs to the Casparian strip membrane proteins (CASP) family. In terms of assembly, homodimer and heterodimers.

Its subcellular location is the cell membrane. The sequence is that of CASP-like protein 1D1 from Oryza sativa subsp. japonica (Rice).